Here is a 357-residue protein sequence, read N- to C-terminus: Glutamate 5-kinase (357 aa).

Residue Lys7 coordinates ATP. Substrate contacts are provided by Ser43, Asp130, and Asn142. ATP contacts are provided by residues 162 to 163 (TD) and 205 to 211 (TGGMTTK). In terms of domain architecture, PUA spans 270–353 (EGELQLDAGA…PVVVHRDGLV (84 aa)).

This sequence belongs to the glutamate 5-kinase family.

It localises to the cytoplasm. The catalysed reaction is L-glutamate + ATP = L-glutamyl 5-phosphate + ADP. Its pathway is amino-acid biosynthesis; L-proline biosynthesis; L-glutamate 5-semialdehyde from L-glutamate: step 1/2. Its function is as follows. Catalyzes the transfer of a phosphate group to glutamate to form L-glutamate 5-phosphate. In Synechococcus sp. (strain CC9605), this protein is Glutamate 5-kinase.